We begin with the raw amino-acid sequence, 55 residues long: Potassium channel toxin alpha-KTx 17.1 (55 aa).

The signal sequence occupies residues methionine 1–alanine 23. Glutamine 24 is modified (pyrrolidone carboxylic acid). 3 disulfide bridges follow: cysteine 27–cysteine 43, cysteine 33–cysteine 48, and cysteine 37–cysteine 50. Threonine 53 is modified (threonine amide).

The protein belongs to the short scorpion toxin superfamily. Potassium channel inhibitor family. Alpha-KTx 17 subfamily. As to expression, expressed by the venom gland.

It is found in the secreted. Blocker of potassium channels, which inhibits both the delayed rectifier and fast transient potassium current. The inhibition is reversible and voltage-independent. It causes a depolarizing shift of the steady-state activation curve of the currents, without changing their steady-state inactivation behavior. The polypeptide is Potassium channel toxin alpha-KTx 17.1 (Olivierus martensii (Manchurian scorpion)).